The sequence spans 381 residues: Cytochrome b (381 aa).

Transmembrane regions (helical) follow at residues 34–54 (FGSLLVLCLAVQILTGLFLAM), 78–99 (WLIRNIHANGASLFFICIYLHI), 114–134 (WNIGVILLFLLMATAFVGYVL), and 179–199 (FFAFHFLLPFLIIALTMLHFL). Heme b-binding residues include histidine 84 and histidine 98. 2 residues coordinate heme b: histidine 183 and histidine 197. A ubiquinone is bound at residue histidine 202. The next 4 helical transmembrane spans lie at 227–247 (YKDILGFFTMTLFLGALVLFL), 289–309 (LGGVLALLFSILMLLLVPFLH), 321–341 (LTQLLFWTLVANTIILTWIGG), and 348–368 (FIFIGQIASITYFSLFLIITP).

This sequence belongs to the cytochrome b family. In terms of assembly, the cytochrome bc1 complex contains 3 respiratory subunits (MT-CYB, CYC1 and UQCRFS1), 2 core proteins (UQCRC1 and UQCRC2) and probably 6 low-molecular weight proteins. Heme b serves as cofactor.

It is found in the mitochondrion inner membrane. In terms of biological role, component of the ubiquinol-cytochrome c reductase complex (complex III or cytochrome b-c1 complex) that is part of the mitochondrial respiratory chain. The b-c1 complex mediates electron transfer from ubiquinol to cytochrome c. Contributes to the generation of a proton gradient across the mitochondrial membrane that is then used for ATP synthesis. This is Cytochrome b (mt-cyb) from Heterodontus francisci (Horn shark).